Consider the following 302-residue polypeptide: Orotidine 5'-phosphate decarboxylase (302 aa).

Lysine 105 functions as the Proton donor in the catalytic mechanism.

Belongs to the OMP decarboxylase family. Type 2 subfamily.

The enzyme catalyses orotidine 5'-phosphate + H(+) = UMP + CO2. It functions in the pathway pyrimidine metabolism; UMP biosynthesis via de novo pathway; UMP from orotate: step 2/2. The sequence is that of Orotidine 5'-phosphate decarboxylase from Rhodopirellula baltica (strain DSM 10527 / NCIMB 13988 / SH1).